We begin with the raw amino-acid sequence, 103 residues long: Large ribosomal subunit protein bL21 (103 aa).

This sequence belongs to the bacterial ribosomal protein bL21 family. Part of the 50S ribosomal subunit. Contacts protein L20.

Functionally, this protein binds to 23S rRNA in the presence of protein L20. This chain is Large ribosomal subunit protein bL21, found in Shewanella sp. (strain ANA-3).